The primary structure comprises 40 residues: Beta/delta-ctenitoxin-Pr1a (40 aa).

Cystine bridges form between cysteine 1–cysteine 15, cysteine 8–cysteine 21, cysteine 14–cysteine 31, and cysteine 23–cysteine 29.

The protein belongs to the neurotoxin 03 (Tx2) family. 05 subfamily. As to expression, expressed by the venom gland.

It localises to the secreted. Potent insecticidal toxin that binds to two distinct sites in insect sodium channels, with close affinity (Kd1=34.7 pM and Kd2=35.1 pM). Its association is rather fast (1.4 and 8.5 minutes, respectively for sites 1 and 2) and its dissociation is a slower process (5.4 and 32.8 minutes, respectively). On rat brain synaptosomes the toxin partially competes (~30%) with the beta-toxin CssIV, but does not compete with the alpha-toxin AaII, nor with the beta-toxin Ts VII. On cockroach nerve cord synaptosomes, the toxin does not compete with the anti-insect toxin LqqIT1, but it competes with the 'alpha-like' toxin BomIV (IC(50)=80 pM). In cockroach neurons, the toxin inhibits the inactivation of sodium channels and it shifts the sodium channel activation to hyperpolarizing potentials. Hence, it behaves like an 'alpha-like' toxin and binds preferentially to site 3 on the insect Nav channel, located on the domain IV. The toxin may also inhibit the N-methyl-D-aspartate (NMDA)-subtype of ionotropic glutamate receptor (GRIN). In vivo, the toxin causes excitatory effects on insects. The sequence is that of Beta/delta-ctenitoxin-Pr1a from Phoneutria reidyi (Brazilian Amazonian armed spider).